Consider the following 1649-residue polypeptide: Cortactin-binding protein 2 (1649 aa).

A disordered region spans residues 1-27; it reads MATDSASCEPDLSRAPGDAEGATAEAA. Positions 15-25 are enriched in low complexity; it reads APGDAEGATAE. A coiled-coil region spans residues 118–275; that stretch reads RKMQERMSAQ…EQMKKGNDGK (158 aa). Disordered stretches follow at residues 322–439, 451–476, and 492–604; these read PLSV…PGLN, GNAN…PTSR, and ALSR…LPPK. The span at 330 to 342 shows a compositional bias: polar residues; that stretch reads STGSPLVSTNTKG. The span at 395-416 shows a compositional bias: low complexity; the sequence is STPSTPSGTAPAAAQTLGAAPQ. Polar residues predominate over residues 492–503; sequence ALSRFTSPQAGA. Residue arginine 495 is modified to Asymmetric dimethylarginine. 6 ANK repeats span residues 699–729, 733–762, 766–795, 799–828, 832–861, and 901–931; these read GRPT…DINY, DSHS…RVDA, NGFT…NINH, GGQT…DRSI, DGWT…PAPG, and EGWT…EPER. The disordered stretch occupies residues 1438 to 1471; sequence SAAWRKVNTSPRKKPGHFSSPMWNKPDLKHEGMR. At serine 1510 the chain carries Phosphoserine. Residues 1527–1649 form a disordered region; sequence KSESDISKIA…KHEHVEKRNK (123 aa). Residues 1528 to 1546 show a composition bias toward basic and acidic residues; sequence SESDISKIADSREDLRTFD. Composition is skewed to polar residues over residues 1547–1557, 1571–1584, and 1621–1630; these read SSRTNPVTSAP, PLSS…SNSK, and NTRQLEINNN. Basic and acidic residues predominate over residues 1631–1649; the sequence is SKEENWNVDKHEHVEKRNK.

As to quaternary structure, interacts with CTTN/cortactin SH3 domain. Interacts with STRN, STRN4/zinedin and MOB4/phocein; this interactions mediate the association with the STRIPAK core complex and may regulate dendritic spine distribution of the STRIPAK complex in hippocampal neurons. Activation of glutamate receptors weakens the interaction with STRN and STRN4.

Its subcellular location is the cytoplasm. The protein localises to the cell cortex. It is found in the cell projection. It localises to the dendritic spine. In terms of biological role, regulates the dendritic spine distribution of CTTN/cortactin in hippocampal neurons, and thus controls dendritic spinogenesis and dendritic spine maintenance. Associates with the striatin-interacting phosphatase and kinase (STRIPAK) core complex to regulate dendritic spine distribution of the STRIPAK complex in hippocampal neurons. The protein is Cortactin-binding protein 2 (Cttnbp2) of Rattus norvegicus (Rat).